Here is a 417-residue protein sequence, read N- to C-terminus: Tryptophan synthase beta chain (417 aa).

Position 110 is an N6-(pyridoxal phosphate)lysine (K110).

Belongs to the TrpB family. Tetramer of two alpha and two beta chains. Requires pyridoxal 5'-phosphate as cofactor.

It carries out the reaction (1S,2R)-1-C-(indol-3-yl)glycerol 3-phosphate + L-serine = D-glyceraldehyde 3-phosphate + L-tryptophan + H2O. The protein operates within amino-acid biosynthesis; L-tryptophan biosynthesis; L-tryptophan from chorismate: step 5/5. Functionally, the beta subunit is responsible for the synthesis of L-tryptophan from indole and L-serine. In Prochlorococcus marinus (strain NATL2A), this protein is Tryptophan synthase beta chain.